A 1163-amino-acid chain; its full sequence is GTPase-activating protein (1163 aa).

C2 domains lie at 26 to 148 (PSSN…DHWF) and 261 to 419 (TTST…SAWY). The Ras-GAP domain occupies 520–737 (ERIAPIIKAL…DAVKHFLEVI (218 aa)). A PH domain is found at 762 to 860 (LKEGLMTKYP…WFDLLHKICL (99 aa)). The Btk-type zinc finger occupies 862 to 898 (NSIRMQYFHPSAFVSGFYSCCGRSDENSPGCKKVLDK). Zn(2+) contacts are provided by histidine 870, cysteine 881, cysteine 882, and cysteine 892. Disordered stretches follow at residues 1026-1051 (LNQQHHQQQQHQQQQQQQQQQQLQQF) and 1091-1163 (PFHQ…PPIY). The span at 1091–1157 (PFHQQQQQHH…APPSTTSSSQ (67 aa)) shows a compositional bias: low complexity.

As to quaternary structure, interacts with sty. In terms of tissue distribution, in third instar larvae eye imaginal disk, expressed in cells posterior to the morphogenetic furrow, in all photoreceptor and cone cell precursors as well as in still uncommitted cells.

Inhibitory regulator of the Ras-cyclic AMP pathway. May function as a negative regulator of Ras85D/Ras1 in the sev signaling pathway. Acts cell autonomously in cone cell precursors as a negative regulator of R7 photoreceptor cell determination. The sequence is that of GTPase-activating protein (RasGAP1) from Drosophila melanogaster (Fruit fly).